The primary structure comprises 647 residues: Frizzled-1 (647 aa).

Positions 1–69 (MAEEEAPKKS…WLLEAPLLLG (69 aa)) are cleaved as a signal peptide. Over 73–322 (QAAGQGPGQG…PEELRFSRTW (250 aa)) the chain is Extracellular. The tract at residues 74–104 (AAGQGPGQGPGPGQQPPPPPQQQQSGQQYNG) is disordered. In terms of domain architecture, FZ spans 111 to 230 (PDHGYCQPIS…HGAGELCVGQ (120 aa)). Disulfide bonds link Cys116–Cys177, Cys124–Cys170, Cys161–Cys198, Cys187–Cys227, and Cys191–Cys215. Residue Asn130 is glycosylated (N-linked (GlcNAc...) asparagine). Asn231 carries an N-linked (GlcNAc...) asparagine glycan. The helical transmembrane segment at 323–343 (IGIWSVLCCASTLFTVLTYLV) threads the bilayer. Topologically, residues 344–354 (DMRRFSYPERP) are cytoplasmic. Residues 355-375 (IIFLSGCYTAVAVAYIAGFLL) form a helical membrane-spanning segment. The Extracellular segment spans residues 376-402 (EDRVVCNDKFAEDGARTVAQGTKKEGC). A helical membrane pass occupies residues 403–423 (TILFMMLYFFSMASSIWWVIL). At 424-445 (SLTWFLAAGMKWGHEAIEANSQ) the chain is on the cytoplasmic side. The helical transmembrane segment at 446–466 (YFHLAAWAVPAIKTITILALG) threads the bilayer. At 467 to 489 (QVDGDVLSGVCFVGLNNVDALRG) the chain is on the extracellular side. Residues 490-510 (FVLAPLFVYLFIGTSFLLAGF) form a helical membrane-spanning segment. The Cytoplasmic portion of the chain corresponds to 511–536 (VSLFRIRTIMKHDGTKTEKLEKLMVR). A helical membrane pass occupies residues 537–557 (IGVFSVLYTVPATIVIACYFY). Residues 558–601 (EQAFRDQWERSWVAQSCKSYAIPCPHLQAGGGAPPHPPMSPDFT) lie on the Extracellular side of the membrane. A helical membrane pass occupies residues 602-622 (VFMIKYLMTLIVGITSGFWIW). Topologically, residues 623-647 (SGKTLNSWRKFYTRLTNSKQGETTV) are cytoplasmic. A Lys-Thr-X-X-X-Trp motif, mediates interaction with the PDZ domain of Dvl family members motif is present at residues 625–630 (KTLNSW). Residues 645–647 (TTV) carry the PDZ-binding motif.

This sequence belongs to the G-protein coupled receptor Fz/Smo family. As to quaternary structure, interacts with MYOC. Interacts with WNT7B. In terms of assembly, (Microbial infection) Interacts with C.difficile toxin TcdB; frizzled receptors constitute the major host receptors for TcdB in the colonic epithelium. Ubiquitinated by ZNRF3, leading to its degradation by the proteasome. In terms of tissue distribution, expressed in adult heart, placenta, lung, kidney, pancreas, prostate, and ovary and in fetal lung and kidney.

The protein resides in the cell membrane. Functionally, receptor for Wnt proteins. Activated by WNT3A, WNT3, WNT1 and to a lesser extent WNT2, but apparently not by WNT4, WNT5A, WNT5B, WNT6, WNT7A or WNT7B. Contradictory results showing activation by WNT7B have been described for mouse. Functions in the canonical Wnt/beta-catenin signaling pathway. The canonical Wnt/beta-catenin signaling pathway leads to the activation of disheveled proteins, inhibition of GSK-3 kinase, nuclear accumulation of beta-catenin and activation of Wnt target genes. A second signaling pathway involving PKC and calcium fluxes has been seen for some family members, but it is not yet clear if it represents a distinct pathway or if it can be integrated in the canonical pathway, as PKC seems to be required for Wnt-mediated inactivation of GSK-3 kinase. Both pathways seem to involve interactions with G-proteins. May be involved in transduction and intercellular transmission of polarity information during tissue morphogenesis and/or in differentiated tissues. Its function is as follows. (Microbial infection) Acts as a receptor for C.difficile toxin TcdB in the colonic epithelium. The polypeptide is Frizzled-1 (FZD1) (Homo sapiens (Human)).